Here is a 47-residue protein sequence, read N- to C-terminus: Protein 0.5 (47 aa).

Residues 1–23 (MYMLTIGLLTALGLAVGASFGKA) form the signal peptide. A helical membrane pass occupies residues 24–43 (LGVAVGSYFTACIIIGIIKG).

The protein resides in the host membrane. The polypeptide is Protein 0.5 (Escherichia phage T7 (Bacteriophage T7)).